The primary structure comprises 121 residues: Small ribosomal subunit protein uS13 (121 aa).

Residues 96 to 121 (PVRGQNTKNNARTRKGKAVAIAGKKK) are disordered. The span at 106–121 (ARTRKGKAVAIAGKKK) shows a compositional bias: basic residues.

Belongs to the universal ribosomal protein uS13 family. Part of the 30S ribosomal subunit. Forms a loose heterodimer with protein S19. Forms two bridges to the 50S subunit in the 70S ribosome.

Its function is as follows. Located at the top of the head of the 30S subunit, it contacts several helices of the 16S rRNA. In the 70S ribosome it contacts the 23S rRNA (bridge B1a) and protein L5 of the 50S subunit (bridge B1b), connecting the 2 subunits; these bridges are implicated in subunit movement. Contacts the tRNAs in the A and P-sites. This is Small ribosomal subunit protein uS13 from Streptococcus agalactiae serotype Ia (strain ATCC 27591 / A909 / CDC SS700).